The sequence spans 76 residues: MADFDQELDASGLNCPLPILRAKKTLNAMSSGQVLHVIATDPGSVKDFDAFAKQTGNELMESKEEGGKFHFLIKKS.

Cys15 serves as the catalytic Cysteine persulfide intermediate.

It belongs to the sulfur carrier protein TusA family. In terms of assembly, mostly a monomer, a small portion forms homodimer via intermolecular disulfide bonds. Tightly interacts with DsrEFH.

The protein resides in the cytoplasm. Its pathway is energy metabolism; sulfur metabolism. In terms of biological role, sulfur carrier protein involved in sulfur trafficking for oxidative dissimilatory sulfur metabolism. Component of a sulfur relay system that starts with the sulfur-mobilizing rhodanese-like protein Rhd_2599 (Alvin_2599), which transfers the sulfur from a low-molecular-weight thiol, maybe glutathione, to the TusA protein (Alvin_2600); TusA serves as the sulfur donor for DsrEFH, which persulfurates DsrC; persulfurated DsrC very probably serves as a direct substrate for reverse-acting sulfite reductase, DsrAB. TusA seems to be not exclusively dedicated to sulfur oxidation and may have other important roles in the cell. Might also act as a sulfur mediator required for 2-thiouridine formation of tRNA. The protein is Sulfur carrier protein TusA of Allochromatium vinosum (strain ATCC 17899 / DSM 180 / NBRC 103801 / NCIMB 10441 / D) (Chromatium vinosum).